Consider the following 377-residue polypeptide: NAC domain-containing protein 76 (377 aa).

The 150-residue stretch at 10–159 (VPPGFRFHPT…GWVVCRAFKK (150 aa)) folds into the NAC domain. The DNA-binding element occupies 110–165 (IGMRKTLVFYKGRAPNGQKTDWIMHEYRLESDENAPPQEEGWVVCRAFKKKPMTGQ). The tract at residues 312-347 (GVSGFGGHHEEDNNKIGHYNNEESNNKGSVETASST) is disordered. Positions 318-336 (GHHEEDNNKIGHYNNEESN) are enriched in basic and acidic residues. A compositionally biased stretch (polar residues) spans 337–347 (NKGSVETASST).

It belongs to the plant vascular related NAC-domain protein family. Interacts with NAC030/VND7. Detected in root protoxylem and metaxylem poles and in vessels of protoxylems, outermost metaxylems, inner metaxylems, shoots and hypocotyls. Expressed in roots, hypocotyls, cotyledons and leaves. Present in developing xylems. Specifically expressed in vessels but not in interfascicular fibers in stems.

The protein localises to the nucleus. In terms of biological role, transcription activator that binds to the secondary wall NAC binding element (SNBE), 5'-(T/A)NN(C/T)(T/C/G)TNNNNNNNA(A/C)GN(A/C/T)(A/T)-3', in the promoter of target genes. Involved in xylem formation by promoting the expression of secondary wall-associated transcription factors and of genes involved in secondary wall biosynthesis and programmed cell death, genes driven by the secondary wall NAC binding element (SNBE). Triggers thickening of secondary walls. In Arabidopsis thaliana (Mouse-ear cress), this protein is NAC domain-containing protein 76.